Consider the following 271-residue polypeptide: 4-diphosphocytidyl-2-C-methyl-D-erythritol kinase (271 aa).

The active site involves Lys8. Pro90–Ala100 contacts ATP. The active site involves Asp132.

It belongs to the GHMP kinase family. IspE subfamily.

The catalysed reaction is 4-CDP-2-C-methyl-D-erythritol + ATP = 4-CDP-2-C-methyl-D-erythritol 2-phosphate + ADP + H(+). It functions in the pathway isoprenoid biosynthesis; isopentenyl diphosphate biosynthesis via DXP pathway; isopentenyl diphosphate from 1-deoxy-D-xylulose 5-phosphate: step 3/6. Catalyzes the phosphorylation of the position 2 hydroxy group of 4-diphosphocytidyl-2C-methyl-D-erythritol. The protein is 4-diphosphocytidyl-2-C-methyl-D-erythritol kinase of Parabacteroides distasonis (strain ATCC 8503 / DSM 20701 / CIP 104284 / JCM 5825 / NCTC 11152).